A 526-amino-acid chain; its full sequence is Peptide chain release factor 3 (526 aa).

The tr-type G domain occupies 8 to 277; sequence NKRRTFAIIS…GLTEWAPKPQ (270 aa). Residues 17 to 24, 85 to 89, and 139 to 142 contribute to the GTP site; these read SHPDAGKT, DTPGH, and NKLD.

This sequence belongs to the TRAFAC class translation factor GTPase superfamily. Classic translation factor GTPase family. PrfC subfamily.

The protein localises to the cytoplasm. Its function is as follows. Increases the formation of ribosomal termination complexes and stimulates activities of RF-1 and RF-2. It binds guanine nucleotides and has strong preference for UGA stop codons. It may interact directly with the ribosome. The stimulation of RF-1 and RF-2 is significantly reduced by GTP and GDP, but not by GMP. The polypeptide is Peptide chain release factor 3 (Haemophilus ducreyi (strain 35000HP / ATCC 700724)).